A 194-amino-acid polypeptide reads, in one-letter code: MGMSQNNSTLVAPQPKGIIDPATGKPVGSNDAYFTEINDELADKGFLVTSTDELITWARTGSLMWMQFGLACCAVEGLMQASGPRYDMERFGVAPRASPRQSDVMIVAGTLTNKMAPALRKVYDQMPEPRYVISMGSCANGGGYYHYSYAVVRGCDRVVPVDIYVPGCPPTAEALLYGVLLLQKKIRRTGTIER.

The segment covering Met-1 to Val-11 has biased composition (polar residues). Positions Met-1–Ala-22 are disordered. [4Fe-4S] cluster is bound by residues Cys-72, Cys-73, Cys-138, and Cys-168.

It belongs to the complex I 20 kDa subunit family. NDH-1 is composed of 14 different subunits. Subunits NuoB, C, D, E, F, and G constitute the peripheral sector of the complex. The cofactor is [4Fe-4S] cluster.

The protein localises to the cell inner membrane. The catalysed reaction is a quinone + NADH + 5 H(+)(in) = a quinol + NAD(+) + 4 H(+)(out). Its function is as follows. NDH-1 shuttles electrons from NADH, via FMN and iron-sulfur (Fe-S) centers, to quinones in the respiratory chain. The immediate electron acceptor for the enzyme in this species is believed to be ubiquinone. Couples the redox reaction to proton translocation (for every two electrons transferred, four hydrogen ions are translocated across the cytoplasmic membrane), and thus conserves the redox energy in a proton gradient. This is NADH-quinone oxidoreductase subunit B from Agrobacterium fabrum (strain C58 / ATCC 33970) (Agrobacterium tumefaciens (strain C58)).